A 1001-amino-acid polypeptide reads, in one-letter code: Phosphatidylinositol 4,5-bisphosphate 5-phosphatase A (1001 aa).

Polar residues predominate over residues 1-12 (MEGQSRSGSAKS). 2 disordered regions span residues 1 to 130 (MEGQ…VASV) and 144 to 412 (SASA…QPTC). Positions 6 to 11 (RSGSAK) match the RSXSXX motif 1 motif. The segment covering 13 to 28 (GTRTGLGPLPGTHGAL) has biased composition (low complexity). Residues 29–42 (QTGTPSKKVNSSFQ) show a composition bias toward polar residues. Arg-56 is modified (asymmetric dimethylarginine; alternate). Arg-56 bears the Omega-N-methylarginine; alternate mark. Residue Arg-65 is modified to Omega-N-methylarginine. An Asymmetric dimethylarginine modification is found at Arg-76. Arg-83 is modified (asymmetric dimethylarginine; alternate). An Omega-N-methylarginine; alternate modification is found at Arg-83. Residues 161–174 (SPTSRDQKQLSPTS) show a composition bias toward polar residues. Position 171 is a phosphoserine (Ser-171). Over residues 180–196 (ALATSGLSLALASQEQP) the composition is skewed to low complexity. The span at 197–210 (PQSPSSPSPVPSPV) shows a compositional bias: pro residues. The segment covering 284–294 (ARPEAPRHSPE) has biased composition (basic and acidic residues). Phosphoserine occurs at positions 292 and 325. Residues 338 to 348 (VPPPLPKPPRS) are compositionally biased toward pro residues. The SH3-binding motif lies at 346 to 351 (PRSPSR). Low complexity-rich tracts occupy residues 349–361 (PSRSPSRSPNRSP) and 394–411 (SPVATATSPTSSWSAQPT). Residues 351–356 (RSPSRS) carry the RSXSXX motif 2 motif. Residues 420–723 (ITVVTWNVGT…SDHKPVAARF (304 aa)) form a catalytic region. Residues 724-835 (LLQFAFRDDV…IGVTEPFQIS (112 aa)) are required for ruffle localization. The segment at 837-1001 (PTSESASSST…LGLEDGGLGP (165 aa)) is disordered. The span at 838 to 853 (TSESASSSTDSSGTSS) shows a compositional bias: low complexity. 2 short sequence motifs (RSXSXX motif) span residues 869 to 874 (RSPSPG) and 880 to 885 (RSRSPG). Position 898 is a phosphoserine (Ser-898). Low complexity-rich tracts occupy residues 905 to 917 (SRSPSPQSRQLPR) and 925 to 936 (SSGSRGSSEEGP). The RSXSXX motif 5 motif lies at 906 to 911 (RSPSPQ). A compositionally biased stretch (pro residues) spans 937-949 (SGPPGPWAFPPAV). Ser-985 carries the phosphoserine modification.

The protein belongs to the inositol 1,4,5-trisphosphate 5-phosphatase type II family. Post-translationally, phosphorylated on Ser/Thr residues. As to expression, expressed in heart, brain, kidney, stomach, small intestine and lung. Not expressed in spleen, thymus, skeletal muscle, testis and skin.

Its subcellular location is the cytoplasm. It catalyses the reaction 1D-myo-inositol 1,4,5-trisphosphate + H2O = 1D-myo-inositol 1,4-bisphosphate + phosphate. It carries out the reaction 1D-myo-inositol 1,3,4,5-tetrakisphosphate + H2O = 1D-myo-inositol 1,3,4-trisphosphate + phosphate. The enzyme catalyses a 1,2-diacyl-sn-glycero-3-phospho-(1D-myo-inositol-4,5-bisphosphate) + H2O = a 1,2-diacyl-sn-glycero-3-phospho-(1D-myo-inositol 4-phosphate) + phosphate. In terms of biological role, inositol 5-phosphatase, which converts inositol 1,4,5-trisphosphate to inositol 1,4-bisphosphate. Also converts phosphatidylinositol 4,5-bisphosphate to phosphatidylinositol 4-phosphate and inositol 1,3,4,5-tetrakisphosphate to inositol 1,3,4-trisphosphate in vitro. May be involved in modulation of the function of inositol and phosphatidylinositol polyphosphate-binding proteins that are present at membranes ruffles. The chain is Phosphatidylinositol 4,5-bisphosphate 5-phosphatase A (Inpp5j) from Rattus norvegicus (Rat).